Consider the following 513-residue polypeptide: Probable DNA ligase (513 aa).

Glu213 contacts ATP. Catalysis depends on Lys215, which acts as the N6-AMP-lysine intermediate. Residues Arg220, Arg235, Glu264, Phe304, Arg376, and Lys382 each coordinate ATP.

Belongs to the ATP-dependent DNA ligase family. It depends on Mg(2+) as a cofactor.

The enzyme catalyses ATP + (deoxyribonucleotide)n-3'-hydroxyl + 5'-phospho-(deoxyribonucleotide)m = (deoxyribonucleotide)n+m + AMP + diphosphate.. In terms of biological role, DNA ligase that seals nicks in double-stranded DNA during DNA replication, DNA recombination and DNA repair. In Anaeromyxobacter sp. (strain K), this protein is Probable DNA ligase.